A 121-amino-acid polypeptide reads, in one-letter code: Fluoride-specific ion channel FluC 2 (121 aa).

The next 4 membrane-spanning stretches (helical) occupy residues 3–23 (YLFVFIGGLFGALLRYVLSTL), 27–47 (SGLPLGTLIANIVGAFLMGYL), 64–84 (GVTTGLLGALTTFSTFQFELV), and 92–112 (IALLFIYGLTSYIGGILFCWF). Residues Gly71 and Thr74 each contribute to the Na(+) site.

The protein belongs to the fluoride channel Fluc/FEX (TC 1.A.43) family.

It is found in the cell membrane. The enzyme catalyses fluoride(in) = fluoride(out). Its activity is regulated as follows. Na(+) is not transported, but it plays an essential structural role and its presence is essential for fluoride channel function. Functionally, fluoride-specific ion channel. Important for reducing fluoride concentration in the cell, thus reducing its toxicity. The protein is Fluoride-specific ion channel FluC 2 of Staphylococcus haemolyticus (strain JCSC1435).